Reading from the N-terminus, the 212-residue chain is Large ribosomal subunit protein uL1 (212 aa).

It belongs to the universal ribosomal protein uL1 family. Part of the 50S ribosomal subunit.

Its function is as follows. Binds directly to 23S rRNA. Probably involved in E site tRNA release. Protein L1 is also a translational repressor protein, it controls the translation of its operon by binding to its mRNA. This is Large ribosomal subunit protein uL1 from Natronomonas pharaonis (strain ATCC 35678 / DSM 2160 / CIP 103997 / JCM 8858 / NBRC 14720 / NCIMB 2260 / Gabara) (Halobacterium pharaonis).